We begin with the raw amino-acid sequence, 174 residues long: Ribosomal RNA large subunit methyltransferase H (174 aa).

S-adenosyl-L-methionine contacts are provided by residues L90, G122, and 141–146; that span reads LGELTW.

It belongs to the RNA methyltransferase RlmH family. In terms of assembly, homodimer.

The protein localises to the cytoplasm. It carries out the reaction pseudouridine(1915) in 23S rRNA + S-adenosyl-L-methionine = N(3)-methylpseudouridine(1915) in 23S rRNA + S-adenosyl-L-homocysteine + H(+). In terms of biological role, specifically methylates the pseudouridine at position 1915 (m3Psi1915) in 23S rRNA. This is Ribosomal RNA large subunit methyltransferase H from Brucella melitensis biotype 2 (strain ATCC 23457).